The chain runs to 434 residues: Eukaryotic translation initiation factor 3 subunit E (434 aa).

In terms of domain architecture, PCI spans phenylalanine 219 to leucine 392.

It belongs to the eIF-3 subunit E family. In terms of assembly, component of the eukaryotic translation initiation factor 3 (eIF-3) complex. The eIF-3 complex interacts with pix. Interacts with mxt.

Its subcellular location is the cytoplasm. Functionally, component of the eukaryotic translation initiation factor 3 (eIF-3) complex, which is involved in protein synthesis of a specialized repertoire of mRNAs and, together with other initiation factors, stimulates binding of mRNA and methionyl-tRNAi to the 40S ribosome. The eIF-3 complex specifically targets and initiates translation of a subset of mRNAs involved in cell proliferation. In Drosophila persimilis (Fruit fly), this protein is Eukaryotic translation initiation factor 3 subunit E (eIF3-S6).